A 185-amino-acid polypeptide reads, in one-letter code: ATP synthase subunit b, chloroplastic (185 aa).

Residues 27–49 (LATNPINLSVVLGVLIFFGKGVL) traverse the membrane as a helical segment.

This sequence belongs to the ATPase B chain family. In terms of assembly, F-type ATPases have 2 components, F(1) - the catalytic core - and F(0) - the membrane proton channel. F(1) has five subunits: alpha(3), beta(3), gamma(1), delta(1), epsilon(1). F(0) has four main subunits: a(1), b(1), b'(1) and c(10-14). The alpha and beta chains form an alternating ring which encloses part of the gamma chain. F(1) is attached to F(0) by a central stalk formed by the gamma and epsilon chains, while a peripheral stalk is formed by the delta, b and b' chains.

Its subcellular location is the plastid. The protein localises to the chloroplast thylakoid membrane. Its function is as follows. F(1)F(0) ATP synthase produces ATP from ADP in the presence of a proton or sodium gradient. F-type ATPases consist of two structural domains, F(1) containing the extramembraneous catalytic core and F(0) containing the membrane proton channel, linked together by a central stalk and a peripheral stalk. During catalysis, ATP synthesis in the catalytic domain of F(1) is coupled via a rotary mechanism of the central stalk subunits to proton translocation. Functionally, component of the F(0) channel, it forms part of the peripheral stalk, linking F(1) to F(0). This Vitis vinifera (Grape) protein is ATP synthase subunit b, chloroplastic.